Here is a 341-residue protein sequence, read N- to C-terminus: Retinol dehydrogenase 10-A (341 aa).

The helical; Signal-anchor transmembrane segment at 3–23 (IVLEFFLVTFRVLWAFVLAAG) threads the bilayer. 40–64 (LITGAGSGLGRLFALEFARRRAQLV) contacts NADP(+). S197 contacts substrate. The active-site Proton acceptor is Y210.

This sequence belongs to the short-chain dehydrogenases/reductases (SDR) family.

The protein resides in the microsome membrane. Its subcellular location is the endoplasmic reticulum membrane. The catalysed reaction is all-trans-retinol + NADP(+) = all-trans-retinal + NADPH + H(+). Its pathway is cofactor metabolism; retinol metabolism. Its function is as follows. Retinol dehydrogenase with a clear preference for NADP. Converts all-trans-retinol to all-trans-retinal. Has no detectable activity towards 11-cis-retinol, 9-cis-retinol and 13-cis-retinol. This Xenopus laevis (African clawed frog) protein is Retinol dehydrogenase 10-A (rdh10-a).